A 128-amino-acid polypeptide reads, in one-letter code: Small ribosomal subunit protein eS6 (128 aa).

Belongs to the eukaryotic ribosomal protein eS6 family.

The protein is Small ribosomal subunit protein eS6 of Thermoplasma volcanium (strain ATCC 51530 / DSM 4299 / JCM 9571 / NBRC 15438 / GSS1).